Reading from the N-terminus, the 148-residue chain is UPF0251 protein Cbei_2962 (148 aa).

It belongs to the UPF0251 family.

This Clostridium beijerinckii (strain ATCC 51743 / NCIMB 8052) (Clostridium acetobutylicum) protein is UPF0251 protein Cbei_2962.